The chain runs to 374 residues: Chaperone protein DnaJ (374 aa).

Residues 5 to 70 (DYYEVLGVER…SKRAAYDQYG (66 aa)) form the J domain. The CR-type zinc finger occupies 133–211 (GTTVNIRVPT…CHGEGRVEEY (79 aa)). Zn(2+) contacts are provided by C146, C149, C163, C166, C185, C188, C199, and C202. CXXCXGXG motif repeat units lie at residues 146-153 (CKPCDGSG), 163-170 (CPTCGGIG), 185-192 (CPRCHGQG), and 199-206 (CDSCHGEG).

This sequence belongs to the DnaJ family. In terms of assembly, homodimer. Zn(2+) is required as a cofactor.

Its subcellular location is the cytoplasm. Participates actively in the response to hyperosmotic and heat shock by preventing the aggregation of stress-denatured proteins and by disaggregating proteins, also in an autonomous, DnaK-independent fashion. Unfolded proteins bind initially to DnaJ; upon interaction with the DnaJ-bound protein, DnaK hydrolyzes its bound ATP, resulting in the formation of a stable complex. GrpE releases ADP from DnaK; ATP binding to DnaK triggers the release of the substrate protein, thus completing the reaction cycle. Several rounds of ATP-dependent interactions between DnaJ, DnaK and GrpE are required for fully efficient folding. Also involved, together with DnaK and GrpE, in the DNA replication of plasmids through activation of initiation proteins. In Pseudomonas fluorescens (strain ATCC BAA-477 / NRRL B-23932 / Pf-5), this protein is Chaperone protein DnaJ.